A 177-amino-acid polypeptide reads, in one-letter code: Large ribosomal subunit protein uL6 (177 aa).

This sequence belongs to the universal ribosomal protein uL6 family. In terms of assembly, part of the 50S ribosomal subunit.

In terms of biological role, this protein binds to the 23S rRNA, and is important in its secondary structure. It is located near the subunit interface in the base of the L7/L12 stalk, and near the tRNA binding site of the peptidyltransferase center. The sequence is that of Large ribosomal subunit protein uL6 from Pseudomonas syringae pv. syringae (strain B728a).